A 499-amino-acid polypeptide reads, in one-letter code: Phenylalanine--tRNA ligase alpha subunit (499 aa).

L-phenylalanine is bound by residues Thr342, 381-383, and Phe422; that span reads QID. Position 424 (Glu424) interacts with Mg(2+). Position 447 (Phe447) interacts with L-phenylalanine.

Belongs to the class-II aminoacyl-tRNA synthetase family. Phe-tRNA synthetase alpha subunit type 2 subfamily. In terms of assembly, tetramer of two alpha and two beta subunits. The cofactor is Mg(2+).

The protein resides in the cytoplasm. The catalysed reaction is tRNA(Phe) + L-phenylalanine + ATP = L-phenylalanyl-tRNA(Phe) + AMP + diphosphate + H(+). The sequence is that of Phenylalanine--tRNA ligase alpha subunit from Pyrococcus horikoshii (strain ATCC 700860 / DSM 12428 / JCM 9974 / NBRC 100139 / OT-3).